The sequence spans 124 residues: MRLPTFLKRPRTARQIVGQMGEDEALRYLQKQGLALIERNFRCKGGEIDLVMQDGDTLVFVEVRKRADKNHGGAAASVTPEKQKRLIVAAHIFLQRYKMPPACRFDVIAIDATEMNWLKNAIES.

This sequence belongs to the UPF0102 family.

In Herminiimonas arsenicoxydans, this protein is UPF0102 protein HEAR0176.